The primary structure comprises 119 residues: Large ribosomal subunit protein uL22 (119 aa).

It belongs to the universal ribosomal protein uL22 family. In terms of assembly, part of the 50S ribosomal subunit.

Its function is as follows. This protein binds specifically to 23S rRNA; its binding is stimulated by other ribosomal proteins, e.g. L4, L17, and L20. It is important during the early stages of 50S assembly. It makes multiple contacts with different domains of the 23S rRNA in the assembled 50S subunit and ribosome. Functionally, the globular domain of the protein is located near the polypeptide exit tunnel on the outside of the subunit, while an extended beta-hairpin is found that lines the wall of the exit tunnel in the center of the 70S ribosome. The chain is Large ribosomal subunit protein uL22 from Microcystis aeruginosa (strain NIES-843 / IAM M-2473).